The sequence spans 490 residues: Aspartyl/glutamyl-tRNA(Asn/Gln) amidotransferase subunit B (490 aa).

Belongs to the GatB/GatE family. GatB subfamily. As to quaternary structure, heterotrimer of A, B and C subunits.

It carries out the reaction L-glutamyl-tRNA(Gln) + L-glutamine + ATP + H2O = L-glutaminyl-tRNA(Gln) + L-glutamate + ADP + phosphate + H(+). The catalysed reaction is L-aspartyl-tRNA(Asn) + L-glutamine + ATP + H2O = L-asparaginyl-tRNA(Asn) + L-glutamate + ADP + phosphate + 2 H(+). In terms of biological role, allows the formation of correctly charged Asn-tRNA(Asn) or Gln-tRNA(Gln) through the transamidation of misacylated Asp-tRNA(Asn) or Glu-tRNA(Gln) in organisms which lack either or both of asparaginyl-tRNA or glutaminyl-tRNA synthetases. The reaction takes place in the presence of glutamine and ATP through an activated phospho-Asp-tRNA(Asn) or phospho-Glu-tRNA(Gln). In Methylorubrum extorquens (strain PA1) (Methylobacterium extorquens), this protein is Aspartyl/glutamyl-tRNA(Asn/Gln) amidotransferase subunit B.